A 1681-amino-acid polypeptide reads, in one-letter code: Y' element ATP-dependent helicase protein 1 copy 2 (1681 aa).

The Helicase ATP-binding domain occupies 683-860 (EIYMADTPSV…LQRIGLTGLA (178 aa)). 696–703 (APPGYGKT) provides a ligand contact to ATP. Residues 917-1066 (KLLLALFEIE…EFYGLESKKG (150 aa)) form the Helicase C-terminal domain. The segment covering 1140 to 1283 (ANASTNATTN…ATTTESTNAS (144 aa)) has biased composition (low complexity). The interval 1140 to 1307 (ANASTNATTN…RFHPVTDINK (168 aa)) is disordered. The segment covering 1284-1307 (AKEDANKDGNAEDNRFHPVTDINK) has biased composition (basic and acidic residues).

It belongs to the helicase family. Yeast subtelomeric Y' repeat subfamily.

Its function is as follows. Catalyzes DNA unwinding and is involved in telomerase-independent telomere maintenance. The polypeptide is Y' element ATP-dependent helicase protein 1 copy 2 (YRF1-2) (Saccharomyces cerevisiae (strain ATCC 204508 / S288c) (Baker's yeast)).